Consider the following 148-residue polypeptide: Transcriptional repressor NrdR (148 aa).

A zinc finger lies at 3-34 (CPFCHNEDTQVLDTRVSDEGDTIRRRRRCAKC). The region spanning 49–139 (PAIVKKNGSR…VYRSFADIES (91 aa)) is the ATP-cone domain.

It belongs to the NrdR family. Zn(2+) is required as a cofactor.

Negatively regulates transcription of bacterial ribonucleotide reductase nrd genes and operons by binding to NrdR-boxes. This is Transcriptional repressor NrdR from Polynucleobacter necessarius subsp. necessarius (strain STIR1).